Reading from the N-terminus, the 349-residue chain is Nicotinate-nucleotide--dimethylbenzimidazole phosphoribosyltransferase (349 aa).

A disordered region spans residues 1–20; the sequence is MEFATVSPPDPGTAAAARAR. Glutamate 313 functions as the Proton acceptor in the catalytic mechanism.

The protein belongs to the CobT family.

The catalysed reaction is 5,6-dimethylbenzimidazole + nicotinate beta-D-ribonucleotide = alpha-ribazole 5'-phosphate + nicotinate + H(+). It functions in the pathway nucleoside biosynthesis; alpha-ribazole biosynthesis; alpha-ribazole from 5,6-dimethylbenzimidazole: step 1/2. Its function is as follows. Catalyzes the synthesis of alpha-ribazole-5'-phosphate from nicotinate mononucleotide (NAMN) and 5,6-dimethylbenzimidazole (DMB). This chain is Nicotinate-nucleotide--dimethylbenzimidazole phosphoribosyltransferase, found in Mycolicibacterium paratuberculosis (strain ATCC BAA-968 / K-10) (Mycobacterium paratuberculosis).